Reading from the N-terminus, the 790-residue chain is Kinesin-like protein KIF9 (790 aa).

The 335-residue stretch at 6–340 (KVHAFVRVKP…LRFASRMKLV (335 aa)) folds into the Kinesin motor domain. ATP is bound by residues 12 to 14 (RVK) and 93 to 100 (GQTGAGKT). Residues 342–380 (TEPAINEKYDAERMVKNLEKELALLKQELAIHDSLTNRT) are a coiled coil. A disordered region spans residues 477–578 (QNFGLGVAPF…IRPDTPPSKP (102 aa)). Positions 525 to 534 (VSTSKTQLVP) are enriched in polar residues. Thr530 carries the phosphothreonine modification. Basic and acidic residues-rich tracts occupy residues 537–552 (KDGD…RETS) and 561–570 (SPKEELRPIR). Position 546 is a phosphoserine (Ser546). The stretch at 658–690 (LLILKLKDLKKQYRSEYQDLRDLRAEIQYCQHL) forms a coiled coil.

This sequence belongs to the TRAFAC class myosin-kinesin ATPase superfamily. Kinesin family. In terms of assembly, interacts with HYDIN.

It is found in the cytoplasm. The protein resides in the cytoskeleton. It localises to the cell projection. The protein localises to the cilium. Its subcellular location is the flagellum. It is found in the flagellum axoneme. Functionally, essential for normal male fertility and for progressive motility of spermatozoa. This chain is Kinesin-like protein KIF9 (KIF9), found in Homo sapiens (Human).